We begin with the raw amino-acid sequence, 102 residues long: MNAIPLEHGLAVAGVLFCLGLVGLMVRRNILFVLMSLEIMMNAAALAFVVAGSRWAQPDGQVMFILVISLAAAEASIGLAILMQLYRRFHTLDIDAASEMRG.

3 helical membrane-spanning segments follow: residues 6-26, 30-50, and 62-82; these read LEHGLAVAGVLFCLGLVGLMV, ILFVLMSLEIMMNAAALAFVV, and VMFILVISLAAAEASIGLAIL.

Belongs to the complex I subunit 4L family. In terms of assembly, NDH-1 is composed of 13 different subunits. Subunits NuoA, H, J, K, L, M, N constitute the membrane sector of the complex.

The protein resides in the cell inner membrane. It carries out the reaction a quinone + NADH + 5 H(+)(in) = a quinol + NAD(+) + 4 H(+)(out). Functionally, NDH-1 shuttles electrons from NADH, via FMN and iron-sulfur (Fe-S) centers, to quinones in the respiratory chain. The immediate electron acceptor for the enzyme in this species is believed to be ubiquinone. Couples the redox reaction to proton translocation (for every two electrons transferred, four hydrogen ions are translocated across the cytoplasmic membrane), and thus conserves the redox energy in a proton gradient. The polypeptide is NADH-quinone oxidoreductase subunit K (Pseudomonas syringae pv. tomato (strain ATCC BAA-871 / DC3000)).